The following is a 299-amino-acid chain: ATP phosphoribosyltransferase (299 aa).

Belongs to the ATP phosphoribosyltransferase family. Long subfamily. Requires Mg(2+) as cofactor.

Its subcellular location is the cytoplasm. It catalyses the reaction 1-(5-phospho-beta-D-ribosyl)-ATP + diphosphate = 5-phospho-alpha-D-ribose 1-diphosphate + ATP. It participates in amino-acid biosynthesis; L-histidine biosynthesis; L-histidine from 5-phospho-alpha-D-ribose 1-diphosphate: step 1/9. Its activity is regulated as follows. Feedback inhibited by histidine. Functionally, catalyzes the condensation of ATP and 5-phosphoribose 1-diphosphate to form N'-(5'-phosphoribosyl)-ATP (PR-ATP). Has a crucial role in the pathway because the rate of histidine biosynthesis seems to be controlled primarily by regulation of HisG enzymatic activity. In Actinobacillus pleuropneumoniae serotype 5b (strain L20), this protein is ATP phosphoribosyltransferase.